Consider the following 268-residue polypeptide: Protein APE_1980.1 (268 aa).

It belongs to the CinA family.

The sequence is that of Protein APE_1980.1 from Aeropyrum pernix (strain ATCC 700893 / DSM 11879 / JCM 9820 / NBRC 100138 / K1).